The following is a 131-amino-acid chain: Translation initiation factor 5A (131 aa).

Lysine 37 is subject to Hypusine.

It belongs to the eIF-5A family.

The protein resides in the cytoplasm. In terms of biological role, functions by promoting the formation of the first peptide bond. This Methanococcus maripaludis (strain C5 / ATCC BAA-1333) protein is Translation initiation factor 5A (eIF5A).